The chain runs to 267 residues: Placental prolactin-related protein 2 (267 aa).

2 N-linked (GlcNAc...) asparagine glycosylation sites follow: asparagine 99 and asparagine 121. 2 disulfides stabilise this stretch: cysteine 126–cysteine 244 and cysteine 261–cysteine 267.

This sequence belongs to the somatotropin/prolactin family.

Its subcellular location is the secreted. In terms of biological role, placental prolactin-related proteins may play a specific role during gestation. The protein is Placental prolactin-related protein 2 (PRP2) of Bos taurus (Bovine).